The sequence spans 462 residues: uncharacterized protein (462 aa).

Positions 1 to 108 (MEDSNTNKDI…NGQDDQDEMD (108 aa)) are disordered. The segment covering 36–51 (TVERILERKQKERESK) has biased composition (basic and acidic residues). Over residues 64 to 95 (SSPSSLLSSPISSNDNNNNNNNNNNESFDINN) the composition is skewed to low complexity. Residues 119-150 (LLKRKAALAAKKKESLAEQMKKYNQQYDSIIS) adopt a coiled-coil conformation. Residues 188–208 (SKLQSLNNNTSPSTSSSNLID) form a disordered region. A compositionally biased stretch (low complexity) spans 190–208 (LQSLNNNTSPSTSSSNLID).

This is an uncharacterized protein from Dictyostelium discoideum (Social amoeba).